The primary structure comprises 399 residues: Na(+)/H(+) antiporter NhaA (399 aa).

The next 11 helical transmembrane spans lie at 12-32, 60-80, 94-114, 126-146, 155-175, 178-198, 206-226, 263-283, 284-304, 336-356, and 372-392; these read LDIA…IAAN, LLLW…GLEI, LAAL…LIYA, GWAI…TLLG, IFLT…IAFF, ASLS…LIGL, LWPY…SGVH, PWVT…VSLA, GLPP…GLFL, GVAL…TLAF, and LGVL…LRLS.

The protein belongs to the NhaA Na(+)/H(+) (TC 2.A.33) antiporter family.

Its subcellular location is the cell inner membrane. The enzyme catalyses Na(+)(in) + 2 H(+)(out) = Na(+)(out) + 2 H(+)(in). Na(+)/H(+) antiporter that extrudes sodium in exchange for external protons. The protein is Na(+)/H(+) antiporter NhaA of Rhodospirillum rubrum (strain ATCC 11170 / ATH 1.1.1 / DSM 467 / LMG 4362 / NCIMB 8255 / S1).